We begin with the raw amino-acid sequence, 218 residues long: MADVSAKIVKDLRDKTGAGMMDCKKALAESDGDMVKASEWLRQKGIASAEKKSSRIAAEGAIGTYIHTGARVGVLLELNCETDFVARGDLFQGLLKDVAMQVAACPNVEYVSTEEIPVDVVEKEKSIEMGRDDLSGKPEQIKAKIVEGRIGKRLKELVLLEQPFIRDSSMTVAELVKQVAGKIGENIKVRRFTRYTLGEGIEVDQTDFATEVASMKTA.

An involved in Mg(2+) ion dislocation from EF-Tu region spans residues 82–85 (TDFV).

The protein belongs to the EF-Ts family.

It is found in the cytoplasm. In terms of biological role, associates with the EF-Tu.GDP complex and induces the exchange of GDP to GTP. It remains bound to the aminoacyl-tRNA.EF-Tu.GTP complex up to the GTP hydrolysis stage on the ribosome. In Prochlorococcus marinus (strain MIT 9313), this protein is Elongation factor Ts.